Consider the following 189-residue polypeptide: UPF0398 protein lp_1753 (189 aa).

This sequence belongs to the UPF0398 family.

The polypeptide is UPF0398 protein lp_1753 (Lactiplantibacillus plantarum (strain ATCC BAA-793 / NCIMB 8826 / WCFS1) (Lactobacillus plantarum)).